The chain runs to 130 residues: Protein ApaG (130 aa).

The region spanning S3 to R127 is the ApaG domain.

In Brucella suis biovar 1 (strain 1330), this protein is Protein ApaG.